The sequence spans 51 residues: ATP synthase F(1) complex subunit epsilon, mitochondrial (51 aa).

N6-acetyllysine; alternate is present on residues lysine 21, lysine 32, and lysine 37. N6-succinyllysine; alternate occurs at positions 21, 32, and 37. Position 44 is an N6-acetyllysine (lysine 44).

Belongs to the eukaryotic ATPase epsilon family. As to quaternary structure, component of the ATP synthase complex composed at least of ATP5F1A/subunit alpha, ATP5F1B/subunit beta, ATP5MC1/subunit c (homooctomer), MT-ATP6/subunit a, MT-ATP8/subunit 8, ATP5ME/subunit e, ATP5MF/subunit f, ATP5MG/subunit g, ATP5MK/subunit k, ATP5MJ/subunit j, ATP5F1C/subunit gamma, ATP5F1D/subunit delta, ATP5F1E/subunit epsilon, ATP5PF/subunit F6, ATP5PB/subunit b, ATP5PD/subunit d, ATP5PO/subunit OSCP. ATP synthase complex consists of a soluble F(1) head domain (subunits alpha(3) and beta(3)) - the catalytic core - and a membrane F(0) domain - the membrane proton channel (subunits c, a, 8, e, f, g, k and j). These two domains are linked by a central stalk (subunits gamma, delta, and epsilon) rotating inside the F1 region and a stationary peripheral stalk (subunits F6, b, d, and OSCP).

The protein resides in the mitochondrion. It localises to the mitochondrion inner membrane. Its function is as follows. Subunit epsilon, of the mitochondrial membrane ATP synthase complex (F(1)F(0) ATP synthase or Complex V) that produces ATP from ADP in the presence of a proton gradient across the membrane which is generated by electron transport complexes of the respiratory chain. ATP synthase complex consist of a soluble F(1) head domain - the catalytic core - and a membrane F(1) domain - the membrane proton channel. These two domains are linked by a central stalk rotating inside the F(1) region and a stationary peripheral stalk. During catalysis, ATP synthesis in the catalytic domain of F(1) is coupled via a rotary mechanism of the central stalk subunits to proton translocation. In vivo, can only synthesize ATP although its ATP hydrolase activity can be activated artificially in vitro. May be essential for the assembly of F(1) and may play an important role in the incorporation of the hydrophobic subunit c into the F(1)-c oligomer rotor of the mitochondrial ATP synthase complex. This Rattus norvegicus (Rat) protein is ATP synthase F(1) complex subunit epsilon, mitochondrial.